A 60-amino-acid polypeptide reads, in one-letter code: Large ribosomal subunit protein bL32 (60 aa).

Residues 1–60 are disordered; the sequence is MAVQQNKKSRSARDMRRSHDALSENALSVEKTTGEVHLRHHVSPEGVYRGRKVVDKGADE. Residues 11–22 show a composition bias toward basic and acidic residues; it reads SARDMRRSHDAL.

It belongs to the bacterial ribosomal protein bL32 family.

The sequence is that of Large ribosomal subunit protein bL32 from Pseudomonas putida (strain ATCC 700007 / DSM 6899 / JCM 31910 / BCRC 17059 / LMG 24140 / F1).